A 209-amino-acid chain; its full sequence is Pyridoxal 5'-phosphate synthase subunit PdxT (209 aa).

Position 58–60 (58–60 (GES)) interacts with L-glutamine. Residue cysteine 90 is the Nucleophile of the active site. Residues arginine 119 and 148–149 (IR) contribute to the L-glutamine site. Active-site charge relay system residues include histidine 185 and glutamate 187.

The protein belongs to the glutaminase PdxT/SNO family. As to quaternary structure, in the presence of PdxS, forms a dodecamer of heterodimers. Only shows activity in the heterodimer.

The enzyme catalyses aldehydo-D-ribose 5-phosphate + D-glyceraldehyde 3-phosphate + L-glutamine = pyridoxal 5'-phosphate + L-glutamate + phosphate + 3 H2O + H(+). It carries out the reaction L-glutamine + H2O = L-glutamate + NH4(+). It functions in the pathway cofactor biosynthesis; pyridoxal 5'-phosphate biosynthesis. Its function is as follows. Catalyzes the hydrolysis of glutamine to glutamate and ammonia as part of the biosynthesis of pyridoxal 5'-phosphate. The resulting ammonia molecule is channeled to the active site of PdxS. The polypeptide is Pyridoxal 5'-phosphate synthase subunit PdxT (Clavibacter sepedonicus (Clavibacter michiganensis subsp. sepedonicus)).